A 287-amino-acid chain; its full sequence is Nucleotide-binding protein HD_0584 (287 aa).

An ATP-binding site is contributed by 8 to 15; that stretch reads GRSGSGKS. 56-59 is a GTP binding site; sequence DIRN.

It belongs to the RapZ-like family.

Displays ATPase and GTPase activities. In Haemophilus ducreyi (strain 35000HP / ATCC 700724), this protein is Nucleotide-binding protein HD_0584.